A 136-amino-acid polypeptide reads, in one-letter code: Pilotin AspS 2 (136 aa).

Residues 1 to 24 form the signal peptide; that stretch reads MSIKQMPGRVLISLLLSVTGLLSG. Cys25 carries N-palmitoyl cysteine lipidation. Residue Cys25 is the site of S-diacylglycerol cysteine attachment. A disulfide bridge links Cys94 with Cys131.

This sequence belongs to the GspS/AspS pilotin family. In terms of assembly, cryo-electron microscopy shows that the complex forms a cylindrical channel with 15 GspD2 subunits, each of which interacts with its surrounding AspS2 (GspS-beta).

It is found in the cell outer membrane. Functionally, part of a type II secretion system (T2SS, formerly general secretion pathway, GSP) for the export of folded proteins across the outer membrane. Required for correct assembly of the type II secretion system-beta (T2SS-beta), for localization of GspD-beta to the cell outer membrane and for export of a labile enterotoxin by T2SS-beta. Each AspS2 binds to 2 GspD2 subunits and may clamp the monomers together, stabilizing structure and accelerating its assembly. This chain is Pilotin AspS 2, found in Escherichia coli O78:H11 (strain H10407 / ETEC).